The primary structure comprises 438 residues: Phosphoribosylamine--glycine ligase (438 aa).

In terms of domain architecture, ATP-grasp spans 107-319 (RKLFEDYDIP…LAKISKQIVD (213 aa)). Residue 134-197 (IDNFDEPVVV…EELLLGEEYT (64 aa)) participates in ATP binding. 3 residues coordinate Mg(2+): Gln-277, Glu-289, and Asn-291. Positions 277, 289, and 291 each coordinate Mn(2+).

It belongs to the GARS family. The cofactor is Mg(2+). Mn(2+) serves as cofactor.

It carries out the reaction 5-phospho-beta-D-ribosylamine + glycine + ATP = N(1)-(5-phospho-beta-D-ribosyl)glycinamide + ADP + phosphate + H(+). It participates in purine metabolism; IMP biosynthesis via de novo pathway; N(1)-(5-phospho-D-ribosyl)glycinamide from 5-phospho-alpha-D-ribose 1-diphosphate: step 2/2. In Methanosphaera stadtmanae (strain ATCC 43021 / DSM 3091 / JCM 11832 / MCB-3), this protein is Phosphoribosylamine--glycine ligase.